The sequence spans 460 residues: Angiopoietin-related protein 3 (460 aa).

An N-terminal signal peptide occupies residues 1–16; sequence MFTIKLLLFIVPLVIS. The interval 17 to 165 is sufficient to inhibit LPL lipase activity; sequence SRIDQDNSSF…PEHPEVTSLK (149 aa). The segment at 17-207 is sufficient to inhibit LIPG/EL phospholipase activity; it reads SRIDQDNSSF…EIENQLRRTS (191 aa). Positions 32–56 are required for inhibition of LPL lipase activity; the sequence is EPKSRFAMLDDVKILANGLLQLGHG. A coiled-coil region spans residues 85 to 210; the sequence is LSLQTSEIKE…NQLRRTSIQE (126 aa). N115 carries an N-linked (GlcNAc...) asparagine glycan. T226 is a glycosylation site (O-linked (GalNAc) threonine). The Fibrinogen C-terminal domain occupies 237–455; sequence VKHDGIPAEC…STKMLIHPTD (219 aa). A disulfide bridge connects residues C246 and C274. N296 and N357 each carry an N-linked (GlcNAc...) asparagine glycan. C394 and C408 are disulfide-bonded.

Interacts with ANGPTL8. Interacts with ITGB3. Post-translationally, O-glycosylated at Thr-226 by GALNT2; blocks processing and activation by proprotein convertases. In terms of processing, in part proteolytically cleaved by proprotein convertases; proposed to be involved in activation. Expressed principally in liver. Weakly expressed in kidney. Binds to adipocytes. Increased expression and colocalization with activated ITGB3 in glomeruli of patients with nephrotic syndrome showing effaced podocyte foot processes (at protein level).

It is found in the secreted. It localises to the cell projection. Its subcellular location is the lamellipodium. In terms of biological role, acts in part as a hepatokine that is involved in regulation of lipid and glucose metabolism. Proposed to play a role in the trafficking of energy substrates to either storage or oxidative tissues in response to food intake. Has a stimulatory effect on plasma triglycerides (TG), which is achieved by suppressing plasma TG clearance via inhibition of LPL activity. The inhibition of LPL activity appears to be an indirect mechanism involving recruitment of proprotein convertases PCSK6 and FURIN to LPL leading to cleavage and dissociation of LPL from the cell surface; the function does not require ANGPTL3 proteolytic cleavage but seems to be mediated by the N-terminal domain, and is not inhibited by GPIHBP1. Can inhibit endothelial lipase, causing increased plasma levels of high density lipoprotein (HDL) cholesterol and phospholipids. Can bind to adipocytes to activate lipolysis, releasing free fatty acids and glycerol. Suppresses LPL specifically in oxidative tissues which is required to route very low density lipoprotein (VLDL)-TG to white adipose tissue (WAT) for storage in response to food; the function may involve cooperation with circulating, liver-derived ANGPTL8 and ANGPTL4 expression in WAT. Contributes to lower plasma levels of low density lipoprotein (LDL)-cholesterol by a mechanism that is independent of the canonical pathway implicating APOE and LDLR. May stimulate hypothalamic LPL activity. Functionally, in vitro inhibits LPL activity; not effective on GPIHBP1-stabilized LPL. Involved in angiogenesis. Binds to endothelial cells via integrin alpha-V/beta-3 (ITGAV:ITGB3), activates FAK, MAPK and Akt signaling pathways and induces cell adhesion and cell migration. Secreted from podocytes, may modulate properties of glomerular endothelial cells involving integrin alpha-V/beta-3 and Akt signaling. May increase the motility of podocytes. May induce actin filament rearrangements in podocytes implicating integrin alpha-V/beta-3 and Rac1 activation. Binds to hematopoietic stem cells (HSC) and is involved in the regulation of HSC activity probably implicating down-regulation of IKZF1/IKAROS. The protein is Angiopoietin-related protein 3 (ANGPTL3) of Homo sapiens (Human).